A 1498-amino-acid polypeptide reads, in one-letter code: Mitogen-activated protein kinase kinase kinase nsy-1 (1498 aa).

2 disordered regions span residues 1–35 (MSQN…PTAY) and 190–209 (LQSY…FART). The segment covering 22 to 33 (LPLPPRGAPPPT) has biased composition (pro residues). In terms of domain architecture, Protein kinase spans 664–925 (SNERVVLGKG…AKDLLQDPFI (262 aa)). ATP is bound by residues 670–678 (LGKGTYGTV) and Lys693. Asp790 serves as the catalytic Proton acceptor. The disordered stretch occupies residues 1022–1050 (IDHARNRTFSSSSPVPDGQSSAGTNMSHP). The segment covering 1031 to 1042 (SSSSPVPDGQSS) has biased composition (low complexity). Residues 1276–1314 (SREERVREDRKELRTLQEENEILIERLLQVERELNAQLK) adopt a coiled-coil conformation. The segment at 1461–1498 (QPVFLSPMRSRDDSLDDYHSSSADDMYTGAAAETSSGN) is disordered. Over residues 1469 to 1479 (RSRDDSLDDYH) the composition is skewed to basic and acidic residues.

The protein belongs to the protein kinase superfamily. STE Ser/Thr protein kinase family. MAP kinase kinase kinase subfamily. As to quaternary structure, interacts with unc-43. Interacts with sek-1. Mg(2+) is required as a cofactor. Post-translationally, may be phosphorylated upon pathogenic bacterial infection. May be regulated by proteasomal degradation mediated by the E3-ubiquitin ligase rle-1. In terms of tissue distribution, expressed in intestine, hypodermis, rectal gland cell and neurons including sensory AWC neurons.

The protein resides in the cell projection. It is found in the axon. Its subcellular location is the perikaryon. The enzyme catalyses L-seryl-[protein] + ATP = O-phospho-L-seryl-[protein] + ADP + H(+). It carries out the reaction L-threonyl-[protein] + ATP = O-phospho-L-threonyl-[protein] + ADP + H(+). Its function is as follows. Serine/threonine-protein kinase which, by phosphorylating and activating sek-1, plays an important role in the activation of the p38 pathway also composed of the downstream effectors sek-1 and pmk-1. Downstream of CaMKII unc-43 and adapter protein tir-1, plays a role in determining asymmetric cell fates in olfactory AWC neurons during neuronal development. Activation results in the repression of odorant receptor str-2 expression in one of the 2 AWC neurons. Involved in resistance to pathogenic Gram-positive and Gram-negative bacterial and fungal infection. Involved in resistance to the nematotoxic C.cinerea galectin Cgl2. Probably by activating the sek1/pmk-1/skn-1 pathway, involved in the up-regulation of gcs-1 and glutathione-S-transferase gst-4 expression upon bacterial infection. Probably downstream of tir-1 and nipi-3, required for the expression of antimicrobial peptide nlp-29 in the epidermis in response to fungal infection or physical injury. Plays a role in resistance to several environmental stresses including oxidative, protein misfolding (ER) and osmotic stresses, and DNA-damaging reagents. Plays a role in the stabilization of transcription factor rnt-1 in the intestine during oxidative stress. Involved in germline apoptosis induced by heavy metals, such as Cu(2+). In addition, plays a role in the up-regulation of gcs-1 upon arsenite treatment, most likely through activation of pmk-1, to confer protection against toxicity induced by heavy metals. Plays a role downstream of tir-1 in regulating susceptibility to anoxia. Involved in egg laying. The chain is Mitogen-activated protein kinase kinase kinase nsy-1 from Caenorhabditis elegans.